The sequence spans 258 residues: Acetylglutamate kinase (258 aa).

Substrate contacts are provided by residues 41 to 42, arginine 63, and asparagine 156; that span reads GG.

It belongs to the acetylglutamate kinase family. ArgB subfamily. In terms of assembly, homodimer.

It localises to the cytoplasm. The catalysed reaction is N-acetyl-L-glutamate + ATP = N-acetyl-L-glutamyl 5-phosphate + ADP. The protein operates within amino-acid biosynthesis; L-arginine biosynthesis; N(2)-acetyl-L-ornithine from L-glutamate: step 2/4. Catalyzes the ATP-dependent phosphorylation of N-acetyl-L-glutamate. In Geobacillus stearothermophilus (Bacillus stearothermophilus), this protein is Acetylglutamate kinase.